The following is a 428-amino-acid chain: Enolase (428 aa).

Residue glutamine 163 coordinates (2R)-2-phosphoglycerate. Residue glutamate 205 is the Proton donor of the active site. Residues aspartate 242, glutamate 285, and aspartate 312 each contribute to the Mg(2+) site. Residues lysine 337, arginine 366, serine 367, and lysine 388 each coordinate (2R)-2-phosphoglycerate. The active-site Proton acceptor is the lysine 337.

This sequence belongs to the enolase family. Component of the RNA degradosome, a multiprotein complex involved in RNA processing and mRNA degradation. Requires Mg(2+) as cofactor.

It is found in the cytoplasm. It localises to the secreted. Its subcellular location is the cell surface. The catalysed reaction is (2R)-2-phosphoglycerate = phosphoenolpyruvate + H2O. It functions in the pathway carbohydrate degradation; glycolysis; pyruvate from D-glyceraldehyde 3-phosphate: step 4/5. Catalyzes the reversible conversion of 2-phosphoglycerate (2-PG) into phosphoenolpyruvate (PEP). It is essential for the degradation of carbohydrates via glycolysis. The chain is Enolase from Halorhodospira halophila (strain DSM 244 / SL1) (Ectothiorhodospira halophila (strain DSM 244 / SL1)).